We begin with the raw amino-acid sequence, 545 residues long: Sterol O-acyltransferase 1 (545 aa).

Position 1 is an N-acetylmethionine (methionine 1). The disordered stretch occupies residues methionine 1–alanine 24. Topologically, residues methionine 1–isoleucine 133 are cytoplasmic. Serine 7 bears the Phosphoserine mark. Residues arginine 9–asparagine 18 are compositionally biased toward polar residues. Histidine 132 contributes to the cholesterol binding site. Residues arginine 134–aspartate 155 traverse the membrane as a helical segment. The Lumenal portion of the chain corresponds to tyrosine 156–glutamine 175. A helical transmembrane segment spans residues phenylalanine 176 to tryptophan 201. Over alanine 202–isoleucine 213 the chain is Cytoplasmic. Residues tyrosine 214–leucine 239 traverse the membrane as a helical segment. Residues alanine 240–serine 247 are Lumenal-facing. The helical transmembrane segment at arginine 248 to proline 271 threads the bilayer. Topologically, residues arginine 272–arginine 314 are cytoplasmic. A helical transmembrane segment spans residues tryptophan 315–isoleucine 347. Over lysine 348–serine 364 the chain is Lumenal. The helical transmembrane segment at isoleucine 365–methionine 390 threads the bilayer. At leucine 391 to arginine 438 the chain is on the cytoplasmic side. Positions phenylalanine 398–asparagine 404 match the FYXDWWN motif motif. Positions 410, 413, 416, 420, 428, and 451 each coordinate an acyl-CoA. Residues phenylalanine 439–leucine 463 form a helical membrane-spanning segment. Histidine 455 is a catalytic residue. Topologically, residues serine 464–valine 469 are lumenal. A helical membrane pass occupies residues leucine 470–valine 485. The Cytoplasmic segment spans residues asparagine 486 to arginine 491. Residues proline 492–cysteine 523 form a helical membrane-spanning segment. Cysteines 523 and 541 form a disulfide. Residues proline 524–phenylalanine 545 lie on the Lumenal side of the membrane.

Belongs to the membrane-bound acyltransferase family. Sterol o-acyltransferase subfamily. In terms of assembly, may form homo- or heterodimers. Interacts with UBIAD1.

Its subcellular location is the endoplasmic reticulum membrane. The catalysed reaction is a sterol + a long-chain fatty acyl-CoA = a long-chain 3-hydroxysterol ester + CoA. It carries out the reaction cholesterol + an acyl-CoA = a cholesterol ester + CoA. The enzyme catalyses cholesterol + (9Z)-octadecenoyl-CoA = cholesteryl (9Z-octadecenoate) + CoA. It catalyses the reaction cholesterol + hexadecanoyl-CoA = cholesteryl hexadecanoate + CoA. The catalysed reaction is octadecanoyl-CoA + cholesterol = cholesteryl octadecanoate + CoA. It carries out the reaction (9Z,12Z)-octadecadienoyl-CoA + cholesterol = cholesteryl (9Z,12Z)-octadecadienoate + CoA. The enzyme catalyses (5Z,8Z,11Z,14Z)-eicosatetraenoyl-CoA + cholesterol = cholesteryl (5Z,8Z,11Z,14Z)-eicosatetraenoate + CoA. It catalyses the reaction (9Z)-hexadecenoyl-CoA + cholesterol = cholesteryl (9Z)-hexadecenoate + CoA. The catalysed reaction is (11Z)-octadecenoyl-CoA + cholesterol = cholesteryl (11Z)-octadecenoate + CoA. It carries out the reaction (7Z)-octadecenoyl-CoA + cholesterol = cholesteryl (7Z)-octadecenoate + CoA. Functionally, catalyzes the formation of fatty acid-cholesterol esters, which are less soluble in membranes than cholesterol. Plays a role in lipoprotein assembly and dietary cholesterol absorption. Preferentially utilizes oleoyl-CoA ((9Z)-octadecenoyl-CoA) as substrate: shows a higher activity towards an acyl-CoA substrate with a double bond at the delta-9 position (9Z) than towards saturated acyl-CoA or an unsaturated acyl-CoA with a double bond at the delta-7 (7Z) or delta-11 (11Z) positions. The chain is Sterol O-acyltransferase 1 from Rattus norvegicus (Rat).